Reading from the N-terminus, the 595-residue chain is 2-succinyl-5-enolpyruvyl-6-hydroxy-3-cyclohexene-1-carboxylate synthase (595 aa).

It belongs to the TPP enzyme family. MenD subfamily. In terms of assembly, homodimer. The cofactor is Mg(2+). It depends on Mn(2+) as a cofactor. Requires thiamine diphosphate as cofactor.

It carries out the reaction isochorismate + 2-oxoglutarate + H(+) = 5-enolpyruvoyl-6-hydroxy-2-succinyl-cyclohex-3-ene-1-carboxylate + CO2. Its pathway is quinol/quinone metabolism; 1,4-dihydroxy-2-naphthoate biosynthesis; 1,4-dihydroxy-2-naphthoate from chorismate: step 2/7. The protein operates within cofactor biosynthesis; phylloquinone biosynthesis. Its function is as follows. Catalyzes the thiamine diphosphate-dependent decarboxylation of 2-oxoglutarate and the subsequent addition of the resulting succinic semialdehyde-thiamine pyrophosphate anion to isochorismate to yield 2-succinyl-5-enolpyruvyl-6-hydroxy-3-cyclohexene-1-carboxylate (SEPHCHC). The protein is 2-succinyl-5-enolpyruvyl-6-hydroxy-3-cyclohexene-1-carboxylate synthase of Synechocystis sp. (strain ATCC 27184 / PCC 6803 / Kazusa).